Here is a 139-residue protein sequence, read N- to C-terminus: Two-component response regulator 24 (139 aa).

Residues 19 to 134 enclose the Response regulatory domain; that stretch reads TALVVDDSFV…KLLSILHKLN (116 aa). Asp-69 is subject to 4-aspartylphosphate.

It belongs to the ARR family. Type-A subfamily. Post-translationally, two-component system major event consists of a His-to-Asp phosphorelay between a sensor histidine kinase (HK) and a response regulator (RR). In plants, the His-to-Asp phosphorelay involves an additional intermediate named Histidine-containing phosphotransfer protein (HPt). This multistep phosphorelay consists of a His-Asp-His-Asp sequential transfer of a phosphate group between first a His and an Asp of the HK protein, followed by the transfer to a conserved His of the HPt protein and finally the transfer to an Asp in the receiver domain of the RR protein. As to expression, mostly expressed in flowers and siliques, primarily restricted to pollen grains.

Its subcellular location is the nucleus. Functionally, functions as a response regulator involved in His-to-Asp phosphorelay signal transduction system. Phosphorylation of the Asp residue in the receiver domain activates the ability of the protein to promote the transcription of target genes. Type-A response regulators seem to act as negative regulators of the cytokinin signaling. This is Two-component response regulator 24 from Arabidopsis thaliana (Mouse-ear cress).